We begin with the raw amino-acid sequence, 493 residues long: Inosine-5'-monophosphate dehydrogenase (493 aa).

CBS domains are found at residues 97–155 (VIID…NAPI) and 159–219 (MTSE…AKDE). NAD(+) contacts are provided by residues Asp-253 and 303–305 (GIG). K(+) contacts are provided by Gly-305 and Gly-307. Ser-308 is an IMP binding site. Cys-310 is a K(+) binding site. Catalysis depends on Cys-310, which acts as the Thioimidate intermediate. Residues 343 to 345 (DGG), 366 to 367 (GS), and 390 to 394 (YRGMG) contribute to the IMP site. The active-site Proton acceptor is Arg-406. An IMP-binding site is contributed by Glu-421. Residues Glu-475, Ser-476, and His-477 each coordinate K(+).

This sequence belongs to the IMPDH/GMPR family. In terms of assembly, homotetramer. The cofactor is K(+).

The catalysed reaction is IMP + NAD(+) + H2O = XMP + NADH + H(+). The protein operates within purine metabolism; XMP biosynthesis via de novo pathway; XMP from IMP: step 1/1. Its activity is regulated as follows. Mycophenolic acid (MPA) is a non-competitive inhibitor that prevents formation of the closed enzyme conformation by binding to the same site as the amobile flap. In contrast, mizoribine monophosphate (MZP) is a competitive inhibitor that induces the closed conformation. MPA is a potent inhibitor of mammalian IMPDHs but a poor inhibitor of the bacterial enzymes. MZP is a more potent inhibitor of bacterial IMPDH. Its function is as follows. Catalyzes the conversion of inosine 5'-phosphate (IMP) to xanthosine 5'-phosphate (XMP), the first committed and rate-limiting step in the de novo synthesis of guanine nucleotides, and therefore plays an important role in the regulation of cell growth. The chain is Inosine-5'-monophosphate dehydrogenase from Streptococcus pyogenes serotype M3 (strain ATCC BAA-595 / MGAS315).